The chain runs to 225 residues: Protein ERP3 (225 aa).

A signal peptide spans 1-23 (MSNLCVLFFQFFFLAQFFAEASP). Residues 24 to 195 (LTFELNKGRK…STEHRIVMFS (172 aa)) are Lumenal-facing. The GOLD domain occupies 33-172 (KECLYTLTPE…LHVLERNIQY (140 aa)). A compositionally biased stretch (basic residues) spans 129–138 (ERRKARKAQR). Positions 129–149 (ERRKARKAQRNLRDSKTDPLQ) are disordered. Residues 196-216 (IYGILLIIGMSCAQIAILEFI) traverse the membrane as a helical segment. The Cytoplasmic segment spans residues 217–225 (FRESRKHNV).

Belongs to the EMP24/GP25L family.

It localises to the endoplasmic reticulum membrane. Its function is as follows. Involved in vesicular protein trafficking. The protein is Protein ERP3 (ERP3) of Saccharomyces cerevisiae (strain ATCC 204508 / S288c) (Baker's yeast).